The sequence spans 160 residues: Dihydrofolate reductase (160 aa).

The DHFR domain occupies 1–160 (MVKAIWAMDQ…KVAYYHKIAR (160 aa)). Residue 5 to 7 (IWA) participates in substrate binding. NADP(+) contacts are provided by residues 6-7 (WA) and 14-19 (IGNGNS). Positions 27 and 32 each coordinate substrate. 43–46 (GSAT) contributes to the NADP(+) binding site. Substrate is bound at residue Arg-57. Residues 62-65 (LTRN) and 101-106 (CGGAQV) contribute to the NADP(+) site. Ser-120 contributes to the substrate binding site.

Belongs to the dihydrofolate reductase family.

It catalyses the reaction (6S)-5,6,7,8-tetrahydrofolate + NADP(+) = 7,8-dihydrofolate + NADPH + H(+). The protein operates within cofactor biosynthesis; tetrahydrofolate biosynthesis; 5,6,7,8-tetrahydrofolate from 7,8-dihydrofolate: step 1/1. In terms of biological role, key enzyme in folate metabolism. Catalyzes an essential reaction for de novo glycine and purine synthesis, and for DNA precursor synthesis. The polypeptide is Dihydrofolate reductase (folA) (Mycoplasma pneumoniae (strain ATCC 29342 / M129 / Subtype 1) (Mycoplasmoides pneumoniae)).